A 176-amino-acid chain; its full sequence is N,N-dimethyl phenylurea N-demethylase subunit beta (176 aa).

The protein belongs to the bacterial ring-hydroxylating dioxygenase beta subunit family. In terms of assembly, pdmA (subunit alpha) and PdmB (subunit beta) form the oxygenase component of a bacterial Rieske non-heme iron oxygenase (RO) system.

It carries out the reaction a 1,1-dimethyl-3-phenylurea + 2 reduced [2Fe-2S]-[ferredoxin] + O2 + 2 H(+) = a 1-methyl-3-phenylurea + formaldehyde + 2 oxidized [2Fe-2S]-[ferredoxin] + H2O. The enzyme catalyses isoproturon + 2 reduced [2Fe-2S]-[ferredoxin] + O2 + 2 H(+) = 1-methyl-3-[4-(propan-2-yl)phenyl]urea + formaldehyde + 2 oxidized [2Fe-2S]-[ferredoxin] + H2O. It catalyses the reaction chlorotoluron + 2 reduced [2Fe-2S]-[ferredoxin] + O2 + 2 H(+) = 3-(3-chloro-4-methylphenyl)-1-methylurea + formaldehyde + 2 oxidized [2Fe-2S]-[ferredoxin] + H2O. The catalysed reaction is metoxuron + 2 reduced [2Fe-2S]-[ferredoxin] + O2 + 2 H(+) = 3-(3-chloro-4-methoxylphenyl)-1-methylurea + formaldehyde + 2 oxidized [2Fe-2S]-[ferredoxin] + H2O. It carries out the reaction monuron + 2 reduced [2Fe-2S]-[ferredoxin] + O2 + 2 H(+) = 3-(4-chlorophenyl)-1-methylurea + formaldehyde + 2 oxidized [2Fe-2S]-[ferredoxin] + H2O. The enzyme catalyses diuron + 2 reduced [2Fe-2S]-[ferredoxin] + O2 + 2 H(+) = 3-(3,4-dichlorophenyl)-1-methylurea + formaldehyde + 2 oxidized [2Fe-2S]-[ferredoxin] + H2O. It catalyses the reaction fluometuron + 2 reduced [2Fe-2S]-[ferredoxin] + O2 + 2 H(+) = 3-[3-(trifluoromethyl)phenyl]-1-methylurea + formaldehyde + 2 oxidized [2Fe-2S]-[ferredoxin] + H2O. The catalysed reaction is fenuron + 2 reduced [2Fe-2S]-[ferredoxin] + O2 + 2 H(+) = 1-methyl-3-phenylurea + formaldehyde + 2 oxidized [2Fe-2S]-[ferredoxin] + H2O. It functions in the pathway xenobiotic degradation. Activity is stimulated in vitro by coexpression of a [3Fe-4S]-type ferredoxin. In terms of biological role, part of the multicomponent N,N-dimethyl phenylurea N-demethylase responsible for the initial N-demethylation step during the bacterial metabolism of N,N-dimethyl-substituted phenylurea herbicides. Catalyzes the mono-N-demethylation of N,N-dimethyl-substituted phenylurea herbicides to their mono-N-demethylated derivatives. Is active on isoproturon (IPU), chlorotoluron, metoxuron, monoron, diuron, fluometuron and fenuron, but cannot transform the N-methoxy-N-methyl-substituted herbicides. The chain is N,N-dimethyl phenylurea N-demethylase subunit beta from Sphingobium sp. (strain YBL2).